The primary structure comprises 346 residues: 3-keto-steroid reductase ERG27 (346 aa).

The NADP(+) site is built by L19, T42, and K48. Residues S182 and Y205 each act as proton donor in the active site. NADP(+) is bound by residues Y205, K209, and S241. K209 acts as the Lowers pKa of active site Tyr in catalysis. Residues 242 to 262 (FSFFQYLNVFTYYGMLFLFYL) form a helical membrane-spanning segment. Residue N272 is glycosylated (N-linked (GlcNAc...) asparagine).

The protein belongs to the short-chain dehydrogenases/reductases (SDR) family. ERG27 subfamily. Heterotetramer of ERG25, ERG26, ERG27 and ERG28. ERG28 acts as a scaffold to tether ERG27 and other 4,4-demethylation-related enzymes, forming a demethylation enzyme complex, in the endoplasmic reticulum. Interacts with ERG25 and ERG28. Also interacts with ERG7, but only in lipid particles.

It is found in the endoplasmic reticulum membrane. Its subcellular location is the lipid droplet. The enzyme catalyses 3-dehydro-4alpha-methylzymosterol + NADPH + H(+) = 4alpha-methylzymosterol + NADP(+). Its pathway is steroid biosynthesis; zymosterol biosynthesis; zymosterol from lanosterol: step 5/6. Its function is as follows. 3-keto-steroid reductase; part of the third module of ergosterol biosynthesis pathway that includes the late steps of the pathway. ERG27 is a catalytic component of the C-4 demethylation complex that catalyzes the reduction of the keto group on the C-3. The third module or late pathway involves the ergosterol synthesis itself through consecutive reactions that mainly occur in the endoplasmic reticulum (ER) membrane. Firstly, the squalene synthase ERG9 catalyzes the condensation of 2 farnesyl pyrophosphate moieties to form squalene, which is the precursor of all steroids. Squalene synthase is crucial for balancing the incorporation of farnesyl diphosphate (FPP) into sterol and nonsterol isoprene synthesis. Secondly, the squalene epoxidase ERG1 catalyzes the stereospecific oxidation of squalene to (S)-2,3-epoxysqualene, which is considered to be a rate-limiting enzyme in steroid biosynthesis. Then, the lanosterol synthase ERG7 catalyzes the cyclization of (S)-2,3 oxidosqualene to lanosterol, a reaction that forms the sterol core. In the next steps, lanosterol is transformed to zymosterol through a complex process involving various demethylation, reduction and desaturation reactions. The lanosterol 14-alpha-demethylase ERG11 (also known as CYP51) catalyzes C14-demethylation of lanosterol to produce 4,4'-dimethyl cholesta-8,14,24-triene-3-beta-ol, which is critical for ergosterol biosynthesis. The C-14 reductase ERG24 reduces the C14=C15 double bond of 4,4-dimethyl-cholesta-8,14,24-trienol to produce 4,4-dimethyl-cholesta-8,24-dienol. 4,4-dimethyl-cholesta-8,24-dienol is substrate of the C-4 demethylation complex ERG25-ERG26-ERG27 in which ERG25 catalyzes the three-step monooxygenation required for the demethylation of 4,4-dimethyl and 4alpha-methylsterols, ERG26 catalyzes the oxidative decarboxylation that results in a reduction of the 3-beta-hydroxy group at the C-3 carbon to an oxo group, and ERG27 is responsible for the reduction of the keto group on the C-3. ERG28 has a role as a scaffold to help anchor ERG25, ERG26 and ERG27 to the endoplasmic reticulum and ERG29 regulates the activity of the iron-containing C4-methylsterol oxidase ERG25. Then, the sterol 24-C-methyltransferase ERG6 catalyzes the methyl transfer from S-adenosyl-methionine to the C-24 of zymosterol to form fecosterol. The C-8 sterol isomerase ERG2 catalyzes the reaction which results in unsaturation at C-7 in the B ring of sterols and thus converts fecosterol to episterol. The sterol-C5-desaturase ERG3 then catalyzes the introduction of a C-5 double bond in the B ring to produce 5-dehydroepisterol. The C-22 sterol desaturase ERG5 further converts 5-dehydroepisterol into ergosta-5,7,22,24(28)-tetraen-3beta-ol by forming the C-22(23) double bond in the sterol side chain. Finally, ergosta-5,7,22,24(28)-tetraen-3beta-ol is substrate of the C-24(28) sterol reductase ERG4 to produce ergosterol. Functionally, facilitates the association of ERG7 with lipid particles preventing its digestion in the endoplasmic reticulum and the lipid particles. The protein is 3-keto-steroid reductase ERG27 of Candida albicans (strain SC5314 / ATCC MYA-2876) (Yeast).